The sequence spans 242 residues: Phosphoribosylaminoimidazole-succinocarboxamide synthase (242 aa).

The protein belongs to the SAICAR synthetase family.

The enzyme catalyses 5-amino-1-(5-phospho-D-ribosyl)imidazole-4-carboxylate + L-aspartate + ATP = (2S)-2-[5-amino-1-(5-phospho-beta-D-ribosyl)imidazole-4-carboxamido]succinate + ADP + phosphate + 2 H(+). The protein operates within purine metabolism; IMP biosynthesis via de novo pathway; 5-amino-1-(5-phospho-D-ribosyl)imidazole-4-carboxamide from 5-amino-1-(5-phospho-D-ribosyl)imidazole-4-carboxylate: step 1/2. The chain is Phosphoribosylaminoimidazole-succinocarboxamide synthase from Cyanothece sp. (strain PCC 7425 / ATCC 29141).